The chain runs to 473 residues: Serine palmitoyltransferase 1 (473 aa).

At 1-15 the chain is on the lumenal side; sequence MATVAEQWVLVEMVQ. The interaction with SPTLC2 stretch occupies residues 1 to 66; sequence MATVAEQWVL…KEELIEEWQP (66 aa). Residues 16–36 form a helical membrane-spanning segment; sequence ALYEAPAYHLILEGILILWII. At 37–473 the chain is on the cytoplasmic side; it reads RLVFSKTYKL…IREAAQAVLL (437 aa). Position 164 is a phosphotyrosine; by ABL (Tyr-164).

This sequence belongs to the class-II pyridoxal-phosphate-dependent aminotransferase family. As to quaternary structure, component of the serine palmitoyltransferase (SPT) complex, which is also composed of SPTLC2 or SPTLC3 and SPTSSA or SPTSSB. The heterodimer with SPTLC2 or SPTLC3 forms the catalytic core of the enzyme, while SPTSSA or SPTSSB subunits determine substrate specificity. SPT also interacts with ORMDL proteins, especially ORMDL3, which negatively regulate SPT activity in the presence of ceramides. Forms dimers of heterodimers with SPTLC2. Interacts with RTN4 (isoform B). The cofactor is pyridoxal 5'-phosphate. In terms of processing, phosphorylation at Tyr-164 inhibits activity and promotes cell survival. As to expression, expressed in astrocytes.

It localises to the endoplasmic reticulum membrane. It carries out the reaction L-serine + hexadecanoyl-CoA + H(+) = 3-oxosphinganine + CO2 + CoA. The catalysed reaction is octadecanoyl-CoA + L-serine + H(+) = 3-oxoeicosasphinganine + CO2 + CoA. It catalyses the reaction tetradecanoyl-CoA + L-serine + H(+) = 3-oxohexadecasphinganine + CO2 + CoA. The enzyme catalyses dodecanoyl-CoA + L-serine + H(+) = 3-oxotetradecasphinganine + CO2 + CoA. It functions in the pathway lipid metabolism; sphingolipid metabolism. With respect to regulation, SPT complex catalytic activity is negatively regulated by ORMDL proteins, including ORMDL3, in the presence of ceramides. This mechanism allows to maintain ceramide levels at sufficient concentrations for the production of complex sphingolipids, but which prevents the accumulation of ceramides to levels that trigger apoptosis. Functionally, component of the serine palmitoyltransferase multisubunit enzyme (SPT) that catalyzes the initial and rate-limiting step in sphingolipid biosynthesis by condensing L-serine and activated acyl-CoA (most commonly palmitoyl-CoA) to form long-chain bases. The SPT complex is also composed of SPTLC2 or SPTLC3 and SPTSSA or SPTSSB. Within this complex, the heterodimer with SPTLC2 or SPTLC3 forms the catalytic core. The composition of the serine palmitoyltransferase (SPT) complex determines the substrate preference. The SPTLC1-SPTLC2-SPTSSA complex shows a strong preference for C16-CoA substrate, while the SPTLC1-SPTLC3-SPTSSA isozyme uses both C14-CoA and C16-CoA as substrates, with a slight preference for C14-CoA. The SPTLC1-SPTLC2-SPTSSB complex shows a strong preference for C18-CoA substrate, while the SPTLC1-SPTLC3-SPTSSB isozyme displays an ability to use a broader range of acyl-CoAs, without apparent preference. Required for adipocyte cell viability and metabolic homeostasis. In Rattus norvegicus (Rat), this protein is Serine palmitoyltransferase 1.